Consider the following 308-residue polypeptide: Cytochrome b (308 aa).

Transmembrane regions (helical) follow at residues 1–21 (FGSL…LLAM), 45–66 (WLIR…YLHI), 81–101 (WNIG…GYVL), and 146–166 (FFAL…IHLT). Residues H51 and H65 each coordinate heme b. H150 and H164 together coordinate heme b. Position 169 (H169) interacts with a ubiquinone. Helical transmembrane passes span 194 to 214 (TKDA…AMFS), 256 to 276 (LGGV…PLLH), and 288 to 308 (LSQF…WIGS).

It belongs to the cytochrome b family. As to quaternary structure, the cytochrome bc1 complex contains 11 subunits: 3 respiratory subunits (MT-CYB, CYC1 and UQCRFS1), 2 core proteins (UQCRC1 and UQCRC2) and 6 low-molecular weight proteins (UQCRH/QCR6, UQCRB/QCR7, UQCRQ/QCR8, UQCR10/QCR9, UQCR11/QCR10 and a cleavage product of UQCRFS1). This cytochrome bc1 complex then forms a dimer. It depends on heme b as a cofactor.

The protein localises to the mitochondrion inner membrane. Component of the ubiquinol-cytochrome c reductase complex (complex III or cytochrome b-c1 complex) that is part of the mitochondrial respiratory chain. The b-c1 complex mediates electron transfer from ubiquinol to cytochrome c. Contributes to the generation of a proton gradient across the mitochondrial membrane that is then used for ATP synthesis. This chain is Cytochrome b (MT-CYB), found in Zaratornis stresemanni (White-cheeked cotinga).